The primary structure comprises 103 residues: Serine rich endogenous peptide 9 (103 aa).

The N-terminal stretch at 1–25 (MENIFFSKLTQVFIVALLCIFIYRT) is a signal peptide. The interval 54–103 (IYVKPPPLKSKDSNQKGKRGETYYKPNSEIGTGPSHSGHGGSSIEHVSSP) is disordered. The span at 62–75 (KSKDSNQKGKRGET) shows a compositional bias: basic and acidic residues. Residues 82–96 (EIGTGPSHSGHGGSS) carry the SCOOP motif motif. Residues 84 to 103 (GTGPSHSGHGGSSIEHVSSP) are compositionally biased toward low complexity. Positions 88–90 (SHS) match the SxS motif essential for MIK2 binding motif.

It belongs to the serine rich endogenous peptide (SCOOP) phytocytokine family. As to quaternary structure, interacts with MIK2 (via extracellular leucine-rich repeat domain); this interaction triggers the formation of complex between MIK2 and the BAK1/SERK3 and SERK4 coreceptors, and subsequent BAK1 activation by phosphorylation. In terms of tissue distribution, mostly expressed in seedlings shoots and roots, and, to a lower extent, in leaves, but barely in flowers.

It localises to the cell membrane. It is found in the secreted. The protein localises to the extracellular space. Its subcellular location is the apoplast. Functionally, brassicaceae-specific phytocytokine (plant endogenous peptide released into the apoplast) perceived by MIK2 in a BAK1/SERK3 and SERK4 coreceptors-dependent manner, that modulates various physiological and antimicrobial processes including growth prevention and reactive oxygen species (ROS) response regulation. The protein is Serine rich endogenous peptide 9 of Arabidopsis thaliana (Mouse-ear cress).